A 238-amino-acid polypeptide reads, in one-letter code: 1-(5-phosphoribosyl)-5-[(5-phosphoribosylamino)methylideneamino] imidazole-4-carboxamide isomerase (238 aa).

The Proton acceptor role is filled by D8. D129 acts as the Proton donor in catalysis.

This sequence belongs to the HisA/HisF family.

Its subcellular location is the cytoplasm. The enzyme catalyses 1-(5-phospho-beta-D-ribosyl)-5-[(5-phospho-beta-D-ribosylamino)methylideneamino]imidazole-4-carboxamide = 5-[(5-phospho-1-deoxy-D-ribulos-1-ylimino)methylamino]-1-(5-phospho-beta-D-ribosyl)imidazole-4-carboxamide. It participates in amino-acid biosynthesis; L-histidine biosynthesis; L-histidine from 5-phospho-alpha-D-ribose 1-diphosphate: step 4/9. This chain is 1-(5-phosphoribosyl)-5-[(5-phosphoribosylamino)methylideneamino] imidazole-4-carboxamide isomerase, found in Anaeromyxobacter sp. (strain Fw109-5).